A 306-amino-acid polypeptide reads, in one-letter code: Putative NylC-analogous protein (306 aa).

This sequence belongs to the peptidase S58 family.

This Agromyces sp. (strain KY5R) protein is Putative NylC-analogous protein.